A 360-amino-acid chain; its full sequence is Thiol protease SEN102 (360 aa).

Positions 1 to 20 (MAKPKFIALALVALSFLSIA) are cleaved as a signal peptide. Residues 21–133 (QSIPFTEKDL…ENVGSLPAAS (113 aa)) constitute a propeptide, activation peptide. 3 cysteine pairs are disulfide-bonded: Cys-151–Cys-193, Cys-185–Cys-225, and Cys-283–Cys-335. The active site involves Cys-154. Catalysis depends on residues His-289 and Asn-310. Asn-353 is a glycosylation site (N-linked (GlcNAc...) asparagine). The Prevents secretion from ER motif lies at 357 to 360 (RDEL).

This sequence belongs to the peptidase C1 family.

It is found in the endoplasmic reticulum lumen. The polypeptide is Thiol protease SEN102 (SEN102) (Hemerocallis sp. (Daylily)).